The sequence spans 146 residues: HTH-type transcriptional regulator FarR (146 aa).

The HTH marR-type domain maps to His7–Lys139. Positions Phe53–Lys76 form a DNA-binding region, H-T-H motif.

With respect to regulation, repressor activity requires the presence of the Integration Host Factor (IHF), which binds to sequences located between FarR binding sites A and C. IHF binding to the promoter region stabilizes the binding of FarR to its binding sites A and C and as a consequence, enhances repression of the farAB operon. Functionally, negatively controls expression of the farAB operon by binding directly to the farAB promoter region. Binds to three sites (sites A, B and C) within the DNA sequence upstream of farA. Also represses its own expression. The sequence is that of HTH-type transcriptional regulator FarR from Neisseria gonorrhoeae.